The sequence spans 486 residues: Cardiolipin synthase A (486 aa).

The next 2 membrane-spanning stretches (helical) occupy residues 3-23 (IFYN…IANI) and 38-58 (MSWL…WFFF). 2 PLD phosphodiesterase domains span residues 219–246 (VDVR…VDPY) and 399–426 (QKGL…DMRS). Active-site residues include His-224, Lys-226, Asp-231, His-404, Lys-406, and Asp-411.

This sequence belongs to the phospholipase D family. Cardiolipin synthase subfamily. ClsA sub-subfamily.

It localises to the cell inner membrane. The catalysed reaction is 2 a 1,2-diacyl-sn-glycero-3-phospho-(1'-sn-glycerol) = a cardiolipin + glycerol. Functionally, catalyzes the reversible phosphatidyl group transfer from one phosphatidylglycerol molecule to another to form cardiolipin (CL) (diphosphatidylglycerol) and glycerol. This Buchnera aphidicola subsp. Acyrthosiphon pisum (strain APS) (Acyrthosiphon pisum symbiotic bacterium) protein is Cardiolipin synthase A.